We begin with the raw amino-acid sequence, 262 residues long: uncharacterized protein (262 aa).

Residues 1–22 (MGYLKRFALYISVMILIFAIAG) form the signal peptide. Cys23 carries N-palmitoyl cysteine lipidation. A lipid anchor (S-diacylglycerol cysteine) is attached at Cys23.

The protein belongs to the staphylococcal tandem lipoprotein family.

Its subcellular location is the cell membrane. This is an uncharacterized protein from Staphylococcus aureus (strain NCTC 8325 / PS 47).